The following is a 357-amino-acid chain: 5-hydroxytryptamine receptor 5A (357 aa).

The Extracellular segment spans residues Met-1 to Leu-36. N-linked (GlcNAc...) asparagine glycans are attached at residues Asn-6 and Asn-21. A helical membrane pass occupies residues Ser-37–Ala-63. The Cytoplasmic segment spans residues Thr-64–His-76. The chain crosses the membrane as a helical span at residues Asn-77–Ser-103. Over Gly-104–Cys-114 the chain is Extracellular. A disulfide bridge connects residues Cys-114 and Cys-192. The helical transmembrane segment at Gln-115 to Leu-137 threads the bilayer. Asp-121 serves as a coordination point for serotonin. At Asp-138 to Lys-155 the chain is on the cytoplasmic side. The chain crosses the membrane as a helical span at residues Cys-156–Pro-176. The Extracellular segment spans residues Leu-177–Pro-198. The helical transmembrane segment at Ser-199–Tyr-220 threads the bilayer. Over Trp-221–Val-287 the chain is Cytoplasmic. Residues Gly-288–Ser-312 form a helical membrane-spanning segment. Topologically, residues Cys-313 to Asp-314 are extracellular. The helical transmembrane segment at Ile-315–Thr-339 threads the bilayer. Topologically, residues Ala-340 to His-357 are cytoplasmic.

The protein belongs to the G-protein coupled receptor 1 family.

Its subcellular location is the cell membrane. Its function is as follows. G-protein coupled receptor for 5-hydroxytryptamine (serotonin), a biogenic hormone that functions as a neurotransmitter, a hormone and a mitogen. Also functions as a receptor for ergot alkaloid derivatives and other psychoactive substances. Ligand binding causes a conformation change that triggers signaling via guanine nucleotide-binding proteins (G proteins) and modulates the activity of downstream effectors. HTR5A is coupled to G(i)/G(o) G alpha proteins and mediates inhibitory neurotransmission: signaling inhibits adenylate cyclase activity and activates a phosphatidylinositol-calcium second messenger system that regulates the release of Ca(2+) ions from intracellular stores. This is 5-hydroxytryptamine receptor 5A from Homo sapiens (Human).